Reading from the N-terminus, the 258-residue chain is uncharacterized protein (258 aa).

Transmembrane regions (helical) follow at residues 8-28, 38-58, 70-90, 121-141, 176-196, 204-224, and 231-251; these read VFLA…IVWF, VFFI…GGVH, EAMQ…GIFE, LEAI…AFAI, LGGI…LLVL, PLFL…AVLY, and HAAA…YWIV.

The protein resides in the cell membrane. This is an uncharacterized protein from Bacillus subtilis (strain 168).